The following is a 388-amino-acid chain: T-cell surface glycoprotein CD1e, membrane-associated (388 aa).

A signal peptide spans 1-19 (MLLLFLLFEGLCCPGENTA). Positions 20–31 (APQALQSYHLAA) are cleaved as a propeptide — removed in sCD1e. Asparagine 47 and asparagine 84 each carry an N-linked (GlcNAc...) asparagine glycan. The 111-residue stretch at 191–301 (PRFLAGLMEA…LGGHDLIIHW (111 aa)) folds into the Ig-like domain. An intrachain disulfide couples cysteine 230 to cysteine 285. The helical transmembrane segment at 305–325 (SIFLILICLTVIVTLVILVVV) threads the bilayer.

In terms of assembly, heterodimer with B2M (beta-2-microglobulin). The association with B2M appears to be facilitated by the presence of the propeptide. Post-translationally, mono-ubiquitinated. Proteolytically cleaved in late endosomes to yield a soluble form. Expressed on cortical thymocytes, dendritic cells, Langerhans cells, on certain T-cell leukemias, and in various other tissues.

It localises to the golgi apparatus membrane. It is found in the early endosome. Its subcellular location is the late endosome. The protein resides in the lysosome lumen. T-cell surface glycoprotein CD1e, soluble binds diacetylated lipids, including phosphatidyl inositides and diacylated sulfoglycolipids, and is required for the presentation of glycolipid antigens on the cell surface. The membrane-associated form is not active. In Homo sapiens (Human), this protein is T-cell surface glycoprotein CD1e, membrane-associated (CD1E).